A 108-amino-acid polypeptide reads, in one-letter code: Large ribosomal subunit protein uL23 (108 aa).

The protein belongs to the universal ribosomal protein uL23 family. As to quaternary structure, part of the 50S ribosomal subunit. Contacts protein L29, and trigger factor when it is bound to the ribosome.

Its function is as follows. One of the early assembly proteins it binds 23S rRNA. One of the proteins that surrounds the polypeptide exit tunnel on the outside of the ribosome. Forms the main docking site for trigger factor binding to the ribosome. The chain is Large ribosomal subunit protein uL23 from Leptothrix cholodnii (strain ATCC 51168 / LMG 8142 / SP-6) (Leptothrix discophora (strain SP-6)).